A 132-amino-acid polypeptide reads, in one-letter code: Ribosome-binding factor A (132 aa).

The protein belongs to the RbfA family. As to quaternary structure, monomer. Binds 30S ribosomal subunits, but not 50S ribosomal subunits or 70S ribosomes.

The protein resides in the cytoplasm. One of several proteins that assist in the late maturation steps of the functional core of the 30S ribosomal subunit. Associates with free 30S ribosomal subunits (but not with 30S subunits that are part of 70S ribosomes or polysomes). Required for efficient processing of 16S rRNA. May interact with the 5'-terminal helix region of 16S rRNA. This is Ribosome-binding factor A from Pasteurella multocida (strain Pm70).